A 270-amino-acid chain; its full sequence is NADPH-dependent 7-cyano-7-deazaguanine reductase (270 aa).

79 to 81 (IES) serves as a coordination point for substrate. 81 to 82 (SK) is an NADPH binding site. Catalysis depends on Cys-177, which acts as the Thioimide intermediate. Asp-184 acts as the Proton donor in catalysis. 216 to 217 (HE) lines the substrate pocket. 245–246 (RG) is a binding site for NADPH.

Belongs to the GTP cyclohydrolase I family. QueF type 2 subfamily. As to quaternary structure, homodimer.

It is found in the cytoplasm. The catalysed reaction is 7-aminomethyl-7-carbaguanine + 2 NADP(+) = 7-cyano-7-deazaguanine + 2 NADPH + 3 H(+). The protein operates within tRNA modification; tRNA-queuosine biosynthesis. Its function is as follows. Catalyzes the NADPH-dependent reduction of 7-cyano-7-deazaguanine (preQ0) to 7-aminomethyl-7-deazaguanine (preQ1). This chain is NADPH-dependent 7-cyano-7-deazaguanine reductase, found in Acinetobacter baumannii (strain ACICU).